The following is a 438-amino-acid chain: ATP phosphoribosyltransferase regulatory subunit (438 aa).

This sequence belongs to the class-II aminoacyl-tRNA synthetase family. HisZ subfamily. In terms of assembly, heteromultimer composed of HisG and HisZ subunits.

It localises to the cytoplasm. It functions in the pathway amino-acid biosynthesis; L-histidine biosynthesis; L-histidine from 5-phospho-alpha-D-ribose 1-diphosphate: step 1/9. Required for the first step of histidine biosynthesis. May allow the feedback regulation of ATP phosphoribosyltransferase activity by histidine. In Geobacter sulfurreducens (strain ATCC 51573 / DSM 12127 / PCA), this protein is ATP phosphoribosyltransferase regulatory subunit.